We begin with the raw amino-acid sequence, 177 residues long: Large ribosomal subunit protein eL20 (177 aa).

This sequence belongs to the eukaryotic ribosomal protein eL20 family.

The sequence is that of Large ribosomal subunit protein eL20 (RpL18A) from Spodoptera frugiperda (Fall armyworm).